A 377-amino-acid chain; its full sequence is Acetylornithine aminotransferase (377 aa).

Residues 94–95 (GT) and Phe121 contribute to the pyridoxal 5'-phosphate site. Residue Arg124 participates in N(2)-acetyl-L-ornithine binding. 206-209 (DEIQ) serves as a coordination point for pyridoxal 5'-phosphate. Lys235 carries the N6-(pyridoxal phosphate)lysine modification. N(2)-acetyl-L-ornithine is bound at residue Ser263. Pyridoxal 5'-phosphate is bound at residue Thr264.

This sequence belongs to the class-III pyridoxal-phosphate-dependent aminotransferase family. ArgD subfamily. As to quaternary structure, homodimer. The cofactor is pyridoxal 5'-phosphate.

The protein localises to the cytoplasm. The enzyme catalyses N(2)-acetyl-L-ornithine + 2-oxoglutarate = N-acetyl-L-glutamate 5-semialdehyde + L-glutamate. It functions in the pathway amino-acid biosynthesis; L-arginine biosynthesis; N(2)-acetyl-L-ornithine from L-glutamate: step 4/4. This chain is Acetylornithine aminotransferase, found in Lactococcus lactis subsp. lactis (strain IL1403) (Streptococcus lactis).